The following is a 472-amino-acid chain: Pentatricopeptide repeat-containing protein At3g18970 (472 aa).

PPR repeat units follow at residues Asn-107–Lys-139, Ser-146–Thr-180, Trp-181–Val-216, Thr-219–Pro-253, Asp-256–Lys-286, Asn-287–Pro-321, Asn-322–Arg-352, and Val-358–Lys-388. A type E motif; degenerate region spans residues Leu-393–Val-472.

It belongs to the PPR family. PCMP-E subfamily.

This chain is Pentatricopeptide repeat-containing protein At3g18970 (PCMP-E93), found in Arabidopsis thaliana (Mouse-ear cress).